A 135-amino-acid chain; its full sequence is Auxin-responsive protein SAUR66 (135 aa).

The protein belongs to the ARG7 family.

It localises to the cell membrane. Functionally, may promote auxin-stimulated organ elongation, such as hypocotyls, stamen filaments and petals. The chain is Auxin-responsive protein SAUR66 from Arabidopsis thaliana (Mouse-ear cress).